The following is a 252-amino-acid chain: MSRKPFIAGNWKMNKNPEEAKAFVEAVASKLPSSDLVEAGIAAPAVDLTAVLAAAKGSNLKVAAQNCYFENSGAFTGETSPQVLKEIGTDYVVIGHSERRDYFHETDEDINKKAKAIFANGMLPIICCGESLETYEAGKAAEFVGAQVSAALAGLTAEQVASTVIAYEPIWAIGTGKSASQDDAQKMCKVVRDVVAADFGQEVADKVRVQYGGSVKPENVASYMACPDVDGALVGGASLEAESFLALLDFVK.

10-12 is a substrate binding site; it reads NWK. The active-site Electrophile is H96. Residue E168 is the Proton acceptor of the active site. Residues G174, S214, and 235 to 236 contribute to the substrate site; that span reads GG.

Belongs to the triosephosphate isomerase family. Homodimer.

The protein resides in the cytoplasm. It carries out the reaction D-glyceraldehyde 3-phosphate = dihydroxyacetone phosphate. It functions in the pathway carbohydrate biosynthesis; gluconeogenesis. The protein operates within carbohydrate degradation; glycolysis; D-glyceraldehyde 3-phosphate from glycerone phosphate: step 1/1. In terms of biological role, involved in the gluconeogenesis. Catalyzes stereospecifically the conversion of dihydroxyacetone phosphate (DHAP) to D-glyceraldehyde-3-phosphate (G3P). In Streptococcus gordonii (strain Challis / ATCC 35105 / BCRC 15272 / CH1 / DL1 / V288), this protein is Triosephosphate isomerase.